Consider the following 29-residue polypeptide: HSQGTFTSDYSKHLDSRYAQEFVQWLMNT.

Ser2 carries the phosphoserine modification.

It belongs to the glucagon family.

The protein localises to the secreted. Functionally, glucagon plays a key role in glucose metabolism and homeostasis. Regulates blood glucose by increasing gluconeogenesis and decreasing glycolysis. In Chinchilla chinchilla (Short-tailed chinchilla), this protein is Glucagon (GCG).